We begin with the raw amino-acid sequence, 286 residues long: MSSNTFTLGTKSVNRLGYGAMQLAGPGVFGPPRDRHVAITVLREALALGVNHIDTSDFYGPHVTNQIIREALYPYSDDLTIVTKIGARRGEDASWLPAFSPAELQKAVHDNLRNLGLDVLDVVNLRVMMGDGHGPAEGSIEASLTVLAEMQQQGLVKHIGLSNVTPTQVAEARKIAEIVCVQNEYNIAHRADDAMIDALAHDGIAYVPFFPLGGFTPLQSSTLSDVAASLGATPMQVALAWLLQRSPNILLIPGTSSVAHLRENMAAEKLHLSEEVLSTLDGISRE.

The active-site Proton donor is the Y59. 210 to 218 (FPLGGFTPL) serves as a coordination point for NADP(+).

This sequence belongs to the aldo/keto reductase family. Aldo/keto reductase 2 subfamily.

It catalyses the reaction pyridoxine + NADP(+) = pyridoxal + NADPH + H(+). It carries out the reaction pyridoxine + NAD(+) = pyridoxal + NADH + H(+). In terms of biological role, catalyzes the NAD(P)H-dependent reduction of pyridoxal to pyridoxine in vitro. Is not able to reduce 4-pyridoxate, and to oxidize pyridoxine or pyridoxamine. Has Kemp eliminase activity towards the non-physiological substrate 5-nitrobenzisoxazole, producing 4-nitro-2-cyanophenol; this activity is not considered to be physiologically relevant. The chain is Pyridoxine 4-dehydrogenase from Escherichia coli (strain K12).